A 220-amino-acid chain; its full sequence is Ribosomal RNA large subunit methyltransferase E (220 aa).

S-adenosyl-L-methionine is bound by residues Gly60, Trp62, Asp92, Asp108, and Asp133. Catalysis depends on Lys173, which acts as the Proton acceptor. A disordered region spans residues Lys198–Arg220.

It belongs to the class I-like SAM-binding methyltransferase superfamily. RNA methyltransferase RlmE family.

It localises to the cytoplasm. The enzyme catalyses uridine(2552) in 23S rRNA + S-adenosyl-L-methionine = 2'-O-methyluridine(2552) in 23S rRNA + S-adenosyl-L-homocysteine + H(+). Its function is as follows. Specifically methylates the uridine in position 2552 of 23S rRNA at the 2'-O position of the ribose in the fully assembled 50S ribosomal subunit. This Burkholderia cenocepacia (strain HI2424) protein is Ribosomal RNA large subunit methyltransferase E.